A 432-amino-acid polypeptide reads, in one-letter code: Cyclin-A2 (432 aa).

The residue at position 1 (Met1) is an N-acetylmethionine. Ser5 is subject to Phosphoserine. Disordered stretches follow at residues 26–45 (LQEDQENINPEKAAPVQQPR) and 55–75 (SGNPRGLAQQQRPKTRRVAPL). Ser55 is subject to Phosphoserine.

It belongs to the cyclin family. Cyclin AB subfamily. Interacts with the CDK1 and CDK2 protein kinases to form serine/threonine kinase holoenzyme complexes. Interacts with CDK1 (hyperphosphorylated form in G1 and underphosphorylated forms in S and G2). Interacts with CDK2; the interaction increases from G1 to G2. Interacts (associated with CDK2 but not with CDK1) with SCAPER; regulates the activity of CCNA2/CDK2 by transiently maintaining CCNA2 in the cytoplasm. Forms a ternary complex with CDK2 and CDKN1B; CDKN1B inhibits the kinase activity of CDK2 through conformational rearrangements. Interacts with INCA1. As to quaternary structure, (Microbial infection) Interacts with human cytomegalovirus protein UL32. Polyubiquitinated via 'Lys-11'-linked ubiquitin by the anaphase-promoting complex (APC/C), leading to its degradation by the proteasome. Deubiquitinated and stabilized by USP37 enables entry into S phase. Ubiquitinated during the G1 phase by the SCF(FBXO31) complex, leading to its proteasomal degradation.

The protein localises to the nucleus. It localises to the cytoplasm. In terms of biological role, cyclin which controls both the G1/S and the G2/M transition phases of the cell cycle. Functions through the formation of specific serine/threonine protein kinase holoenzyme complexes with the cyclin-dependent protein kinases CDK1 or CDK2. The cyclin subunit confers the substrate specificity of these complexes and differentially interacts with and activates CDK1 and CDK2 throughout the cell cycle. The sequence is that of Cyclin-A2 from Homo sapiens (Human).